Consider the following 328-residue polypeptide: Ferredoxin--NADP reductase 2 (328 aa).

FAD contacts are provided by E37, Q45, Y50, V90, F124, D285, and T325.

The protein belongs to the ferredoxin--NADP reductase type 2 family. In terms of assembly, homodimer. FAD serves as cofactor.

It catalyses the reaction 2 reduced [2Fe-2S]-[ferredoxin] + NADP(+) + H(+) = 2 oxidized [2Fe-2S]-[ferredoxin] + NADPH. This is Ferredoxin--NADP reductase 2 from Latilactobacillus sakei subsp. sakei (strain 23K) (Lactobacillus sakei subsp. sakei).